The sequence spans 949 residues: Lon protease homolog, mitochondrial (949 aa).

The transit peptide at 1–65 directs the protein to the mitochondrion; sequence MAASTGYVRL…VLPGGVQWRG (65 aa). Disordered stretches follow at residues 68–94 and 213–240; these read DSGNRGGSDETSEGGAEDGATASTGEG and EGLEPEAEKQKSRRKLKRGKKEVEDELG. Residues 112-359 enclose the Lon N-terminal domain; the sequence is LPLIAITRNP…KALSLLKKEF (248 aa). The segment covering 223–232 has biased composition (basic residues); it reads KSRRKLKRGK. 512 to 519 contributes to the ATP binding site; it reads GPPGVGKT. The 191-residue stretch at 748 to 938 folds into the Lon proteolytic domain; that stretch reads VTPPGVVMGL…RDIFPIAFPR (191 aa). Catalysis depends on residues Ser-844 and Lys-887.

It belongs to the peptidase S16 family. Homohexamer. Organized in a ring with a central cavity. The ATP-binding and proteolytic domains (AP-domain) form a hexameric chamber, while the N-terminal domain is arranged as a trimer of dimers. DNA and RNA binding is stimulated by substrate and inhibited by ATP binding. Interacts with TWNK and mitochondrial DNA polymerase subunit POLG. In terms of tissue distribution, detected in liver &gt; heart &gt; kidney &gt; testis.

Its subcellular location is the mitochondrion matrix. It carries out the reaction Hydrolysis of proteins in presence of ATP.. In terms of biological role, ATP-dependent serine protease that mediates the selective degradation of misfolded, unassembled or oxidatively damaged polypeptides as well as certain short-lived regulatory proteins in the mitochondrial matrix. Endogenous substrates include mitochondrial steroidogenic acute regulatory (StAR) protein, DELE1, helicase Twinkle (TWNK) and the large ribosomal subunit protein MRPL32/bL32m. MRPL32/bL32m is protected from degradation by LONP1 when it is bound to a nucleic acid (RNA), but TWNK is not. May also have a chaperone function in the assembly of inner membrane protein complexes. Participates in the regulation of mitochondrial gene expression and in the maintenance of the integrity of the mitochondrial genome. Binds to mitochondrial promoters and RNA in a single-stranded, site-specific, and strand-specific manner. May regulate mitochondrial DNA replication and/or gene expression using site-specific, single-stranded DNA binding to target the degradation of regulatory proteins binding to adjacent sites in mitochondrial promoters. The polypeptide is Lon protease homolog, mitochondrial (Lonp1) (Mus musculus (Mouse)).